We begin with the raw amino-acid sequence, 456 residues long: Phosphomannomutase (456 aa).

The active-site Phosphoserine intermediate is the serine 98. Mg(2+)-binding residues include serine 98, aspartate 246, aspartate 248, and aspartate 250.

The protein belongs to the phosphohexose mutase family. The cofactor is Mg(2+).

The catalysed reaction is alpha-D-mannose 1-phosphate = D-mannose 6-phosphate. It functions in the pathway nucleotide-sugar biosynthesis; GDP-alpha-D-mannose biosynthesis; alpha-D-mannose 1-phosphate from D-fructose 6-phosphate: step 2/2. The protein operates within bacterial outer membrane biogenesis; LPS O-antigen biosynthesis. In terms of biological role, involved in GDP-mannose biosynthesis which serves as the activated sugar nucleotide precursor for mannose residues in cell surface polysaccharides. This enzyme participates in synthesis of the LPS O9 antigen. This Escherichia coli protein is Phosphomannomutase (manB).